A 328-amino-acid chain; its full sequence is tRNA uridine(34) hydroxylase (328 aa).

The 95-residue stretch at 123 to 217 folds into the Rhodanese domain; the sequence is SDPETVLIDT…YLEEVPKEKS (95 aa). Cys177 functions as the Cysteine persulfide intermediate in the catalytic mechanism. The segment at 304-328 is disordered; that stretch reads AKKLAQLNKQKKQQAKEAARKKAQQ. The span at 317-328 shows a compositional bias: basic and acidic residues; sequence QAKEAARKKAQQ.

This sequence belongs to the TrhO family.

It carries out the reaction uridine(34) in tRNA + AH2 + O2 = 5-hydroxyuridine(34) in tRNA + A + H2O. Its function is as follows. Catalyzes oxygen-dependent 5-hydroxyuridine (ho5U) modification at position 34 in tRNAs. The chain is tRNA uridine(34) hydroxylase from Francisella tularensis subsp. holarctica (strain LVS).